We begin with the raw amino-acid sequence, 416 residues long: Lysosome-associated membrane glycoprotein 3 (416 aa).

The first 27 residues, 1–27 (MPRQLSAAAVLFASLAVILHDGSQMRA), serve as a signal peptide directing secretion. Residues 28-381 (KAFPKTRDYS…NVDECSSDYT (354 aa)) lie on the Lumenal side of the membrane. Residues 135–217 (PPTITPPAHT…ASTVPGSTLA (83 aa)) form a disordered region. Residues 142–170 (AHTTGTSSSTVNHTTGNATQPSNQTTLPA) show a composition bias toward polar residues. A compositionally biased stretch (low complexity) spans 188 to 208 (PTHAPGTTAAAHNTTRTAAPA). N-linked (GlcNAc...) asparagine glycosylation is present at Asn200. An intrachain disulfide couples Cys237 to Cys274. N-linked (GlcNAc...) asparagine glycosylation occurs at Asn291. Cys339 and Cys376 are oxidised to a cystine. The helical transmembrane segment at 382-402 (IVLPVIGAIVVGLCLVGMGVY) threads the bilayer. Residues 403 to 416 (KIRLRCQSSGYQRI) lie on the Cytoplasmic side of the membrane.

It belongs to the LAMP family. As to quaternary structure, monomer. Interacts with FURIN.

The protein resides in the cell surface. It is found in the lysosome membrane. The protein localises to the cytoplasmic vesicle membrane. It localises to the early endosome membrane. In terms of biological role, lysosomal membrane glycoprotein which plays a role in the unfolded protein response (UPR) that contributes to protein degradation and cell survival during proteasomal dysfunction. Plays a role in the process of fusion of the lysosome with the autophagosome, thereby modulating the autophagic process. Promotes hepatocellular lipogenesis through activation of the PI3K/Akt pathway. May also play a role in dendritic cell function and in adaptive immunity. This Macaca mulatta (Rhesus macaque) protein is Lysosome-associated membrane glycoprotein 3 (LAMP3).